The following is a 218-amino-acid chain: Adenylate kinase (218 aa).

10-15 (GAGKGT) contacts ATP. Residues 30 to 59 (STGDMIRETIKSGSVLGQELKKVLDAGELV) are NMP. AMP contacts are provided by residues T31, R36, 57–59 (ELV), and Q92. Positions 122–159 (GRRIHPASGRTYHTKFNPPKVADKDDVTGEPLITRTDD) are LID. ATP contacts are provided by residues R123 and 132–133 (TY). R156 and R167 together coordinate AMP. Position 202 (Q202) interacts with ATP.

The protein belongs to the adenylate kinase family. In terms of assembly, monomer.

The protein resides in the cytoplasm. The catalysed reaction is AMP + ATP = 2 ADP. Its pathway is purine metabolism; AMP biosynthesis via salvage pathway; AMP from ADP: step 1/1. Catalyzes the reversible transfer of the terminal phosphate group between ATP and AMP. Plays an important role in cellular energy homeostasis and in adenine nucleotide metabolism. This chain is Adenylate kinase, found in Francisella tularensis subsp. holarctica (strain LVS).